The sequence spans 354 residues: Uroporphyrinogen decarboxylase (354 aa).

Substrate contacts are provided by residues 27–31 (RQAGR), Asp77, Tyr154, Thr209, and His327.

Belongs to the uroporphyrinogen decarboxylase family. As to quaternary structure, homodimer.

It is found in the cytoplasm. It catalyses the reaction uroporphyrinogen III + 4 H(+) = coproporphyrinogen III + 4 CO2. It functions in the pathway porphyrin-containing compound metabolism; protoporphyrin-IX biosynthesis; coproporphyrinogen-III from 5-aminolevulinate: step 4/4. Its function is as follows. Catalyzes the decarboxylation of four acetate groups of uroporphyrinogen-III to yield coproporphyrinogen-III. This chain is Uroporphyrinogen decarboxylase, found in Histophilus somni (strain 2336) (Haemophilus somnus).